Here is a 107-residue protein sequence, read N- to C-terminus: U1-lycotoxin-Ls1q (107 aa).

Residues 1 to 20 form the signal peptide; the sequence is MMKVLVVVALLVTLISYSSS. The propeptide occupies 21–41; it reads EGIDDLEADELLSLMANEQTR. 4 disulfide bridges follow: cysteine 44/cysteine 59, cysteine 51/cysteine 68, cysteine 58/cysteine 86, and cysteine 70/cysteine 84.

The protein belongs to the neurotoxin 19 (CSTX) family. 04 (U1-Lctx) subfamily. As to expression, expressed by the venom gland.

The protein localises to the secreted. The chain is U1-lycotoxin-Ls1q from Lycosa singoriensis (Wolf spider).